A 118-amino-acid polypeptide reads, in one-letter code: Large ribosomal subunit protein bL20 (118 aa).

This sequence belongs to the bacterial ribosomal protein bL20 family.

Its function is as follows. Binds directly to 23S ribosomal RNA and is necessary for the in vitro assembly process of the 50S ribosomal subunit. It is not involved in the protein synthesizing functions of that subunit. The sequence is that of Large ribosomal subunit protein bL20 from Stutzerimonas stutzeri (strain A1501) (Pseudomonas stutzeri).